The following is a 255-amino-acid chain: MALPDFSMRQLLEAGVHFGHQTHRWNPKMKPYIFGDRNNIHIIDLAQTVPMLSRALQVVSDTVARGGRVLFVGTKRQASEIIADSAKRSAQYYVNSRWLGGMMTNWKTISNSIQRLRKLDEILNGEAQGFTKKERLNLEREREKLDKALGGIRDMGGTPDLMFIIDTNKEKIAIDEAKRLGIPVVAIIDSNCDPDLIDYPIPGNDDASRAIALYCELISRAAIDGIARQQGSSGRDLGASSEVPVEPALEEAAEG.

Positions 230–255 are disordered; the sequence is QGSSGRDLGASSEVPVEPALEEAAEG.

This sequence belongs to the universal ribosomal protein uS2 family.

This chain is Small ribosomal subunit protein uS2, found in Rhizobium johnstonii (strain DSM 114642 / LMG 32736 / 3841) (Rhizobium leguminosarum bv. viciae).